The primary structure comprises 136 residues: Small ribosomal subunit protein uS9 (136 aa).

The tract at residues 97 to 136 is disordered; that stretch reads SPDNRKPLKTEGHLSRDPRAKERRKYGLKKARKAPQFSKR. Residues 98–116 show a composition bias toward basic and acidic residues; the sequence is PDNRKPLKTEGHLSRDPRA. Basic residues predominate over residues 117–136; the sequence is KERRKYGLKKARKAPQFSKR.

This sequence belongs to the universal ribosomal protein uS9 family.

The protein is Small ribosomal subunit protein uS9 of Prochlorococcus marinus (strain AS9601).